A 266-amino-acid chain; its full sequence is Phosphate import ATP-binding protein PstB 2 (266 aa).

Positions 13 to 252 (LEAQGVNVYY…GPTEEIFQNP (240 aa)) constitute an ABC transporter domain. 45-52 (GPSGCGKS) is an ATP binding site.

The protein belongs to the ABC transporter superfamily. Phosphate importer (TC 3.A.1.7) family. In terms of assembly, the complex is composed of two ATP-binding proteins (PstB), two transmembrane proteins (PstC and PstA) and a solute-binding protein (PstS).

It localises to the cell inner membrane. The enzyme catalyses phosphate(out) + ATP + H2O = ADP + 2 phosphate(in) + H(+). In terms of biological role, part of the ABC transporter complex PstSACB involved in phosphate import. Responsible for energy coupling to the transport system. This is Phosphate import ATP-binding protein PstB 2 from Synechocystis sp. (strain ATCC 27184 / PCC 6803 / Kazusa).